Reading from the N-terminus, the 83-residue chain is Mu-theraphotoxin-Hhn2k (83 aa).

The first 21 residues, 1–21 (MKASMFLALAGLVLLFVVDYA), serve as a signal peptide directing secretion. The propeptide occupies 22–48 (SESEEKEFPIELLSKIFAVDVFKGEER). 3 cysteine pairs are disulfide-bonded: Cys50–Cys65, Cys57–Cys70, and Cys64–Cys77. Leu81 carries the post-translational modification Leucine amide.

It belongs to the neurotoxin 10 (Hwtx-1) family. 15 (Hntx-3) subfamily. As to quaternary structure, monomer. As to expression, expressed by the venom gland.

The protein localises to the secreted. In terms of biological role, lethal neurotoxin. Selectively blocks tetrodotoxin-sensitive voltage-gated sodium channels (Nav). Does not affect tetrodotoxin-resistant voltage-gated sodium channels or calcium channels. The sequence is that of Mu-theraphotoxin-Hhn2k from Cyriopagopus hainanus (Chinese bird spider).